A 265-amino-acid polypeptide reads, in one-letter code: Hydroxyethylthiazole kinase 2 (265 aa).

M39 contacts substrate. The ATP site is built by K115 and T168. G195 is a substrate binding site.

Belongs to the Thz kinase family. Mg(2+) serves as cofactor.

It carries out the reaction 5-(2-hydroxyethyl)-4-methylthiazole + ATP = 4-methyl-5-(2-phosphooxyethyl)-thiazole + ADP + H(+). It functions in the pathway cofactor biosynthesis; thiamine diphosphate biosynthesis; 4-methyl-5-(2-phosphoethyl)-thiazole from 5-(2-hydroxyethyl)-4-methylthiazole: step 1/1. Functionally, catalyzes the phosphorylation of the hydroxyl group of 4-methyl-5-beta-hydroxyethylthiazole (THZ). The protein is Hydroxyethylthiazole kinase 2 of Clostridium botulinum (strain Kyoto / Type A2).